A 583-amino-acid polypeptide reads, in one-letter code: SHC-transforming protein 1 (583 aa).

Methionine 1 is subject to N-acetylmethionine. Positions 1-92 (MDLLPPKPKY…EPGRAADDGE (92 aa)) are disordered. The segment covering 16–44 (ESLSSLEEGASGSTPPEELPSPSASSLGP) has biased composition (low complexity). A phosphoserine mark is found at serine 36 and serine 139. The residue at position 154 (lysine 154) is an N6-acetyllysine. Residues 156–339 (MGPGVSYLVR…AGFDGSAWDE (184 aa)) form the PID domain. The tract at residues 340–487 (EEEEPPDHQY…SMAEQLRGEP (148 aa)) is CH1. Residues tyrosine 349 and tyrosine 350 each carry the phosphotyrosine modification. The segment covering 372-384 (AAPGAARPTAPNA) has biased composition (low complexity). The tract at residues 372–415 (AAPGAARPTAPNAQTPSHLGATLPVGQPVGGDPEVRKQMPPPPP) is disordered. Residue tyrosine 427 is modified to Phosphotyrosine. Serine 453 is subject to Phosphoserine. An SH2 domain is found at 488–579 (WFHGKLSRRE…GSELCLQQPV (92 aa)).

Interacts with CPNE3; this interaction may mediate the binding of CPNE3 with ERBB2. Interacts with the NPXY motif of tyrosine-phosphorylated IGF1R and INSR in vitro via the PID domain. Once activated, binds to GRB2. Interacts with tyrosine-phosphorylated CD3T and DDR2. Interacts with the N-terminal region of SH2B2. Interacts with phosphorylated LRP1 and IRS4. Interacts with INPP5D/SHIP1 and INPPL1/SHIP2. Interacts with TRIM31. Interacts with PTPN6/SHP (tyrosine phosphorylated). Identified in a complex containing FGFR4, NCAM1, CDH2, PLCG1, FRS2, SRC, SHC1, GAP43 and CTT. Interacts with ALK, GAB2, GRB7 and KIT. Interacts with FLT4 (tyrosine-phosphorylated). Interacts with EPHB1 and GRB2; activates the MAPK/ERK cascade to regulate cell migration. Interacts with PDGFRB (tyrosine-phosphorylated). Interacts with ERBB4. Interacts with TEK/TIE2 (tyrosine-phosphorylated). Interacts with the Trk receptors NTRK1, NTRK2 and NTRK3; in a phosphotyrosine-dependent manner. Interacts with PTK2/FAK1. Interacts with CEACAM1; this interaction is CEACAM1-phosphorylation-dependent and mediates interaction with EGFR or INSR resulting in decrease coupling of SHC1 to the MAPK3/ERK1-MAPK1/ERK2 pathway. Interacts (via PID domain) with PEAK1 (when phosphorylated at 'Tyr-1188'). Found in a complex with PPP1CA, PPP1CC, SHC1 and PEAK1. In terms of assembly, (Microbial infection) Interacts with herpes simplex virus 1 UL46. Post-translationally, phosphorylated by activated epidermal growth factor receptor. Phosphorylated in response to FLT4 and KIT signaling. Isoform p46Shc and isoform p52Shc are phosphorylated on tyrosine residues of the Pro-rich domain. Isoform p66Shc is phosphorylated on Ser-36 by PRKCB upon treatment with insulin, hydrogen peroxide or irradiation with ultraviolet light. Tyrosine phosphorylated in response to FLT3 signaling. Tyrosine phosphorylated by activated PTK2B/PYK2. Tyrosine phosphorylated by ligand-activated ALK. Tyrosine phosphorylated by ligand-activated PDGFRB. Tyrosine phosphorylated by TEK/TIE2. May be tyrosine phosphorylated by activated PTK2/FAK1; tyrosine phosphorylation was seen in an astrocytoma biopsy, where PTK2/FAK1 kinase activity is high, but not in normal brain tissue. Isoform p52Shc dephosphorylation by PTPN2 may regulate interaction with GRB2. As to expression, widely expressed. Expressed in neural stem cells but absent in mature neurons.

It is found in the cytoplasm. The protein resides in the cell junction. The protein localises to the focal adhesion. Its subcellular location is the mitochondrion matrix. It localises to the mitochondrion. Its function is as follows. Signaling adapter that couples activated growth factor receptors to signaling pathways. Participates in a signaling cascade initiated by activated KIT and KITLG/SCF. Isoform p46Shc and isoform p52Shc, once phosphorylated, couple activated receptor tyrosine kinases to Ras via the recruitment of the GRB2/SOS complex and are implicated in the cytoplasmic propagation of mitogenic signals. Isoform p46Shc and isoform p52Shc may thus function as initiators of the Ras signaling cascade in various non-neuronal systems. Isoform p66Shc does not mediate Ras activation, but is involved in signal transduction pathways that regulate the cellular response to oxidative stress and life span. Isoform p66Shc acts as a downstream target of the tumor suppressor p53 and is indispensable for the ability of stress-activated p53 to induce elevation of intracellular oxidants, cytochrome c release and apoptosis. The expression of isoform p66Shc has been correlated with life span. Participates in signaling downstream of the angiopoietin receptor TEK/TIE2, and plays a role in the regulation of endothelial cell migration and sprouting angiogenesis. This Homo sapiens (Human) protein is SHC-transforming protein 1 (SHC1).